A 198-amino-acid polypeptide reads, in one-letter code: Recombination protein RecR (198 aa).

The segment at 57–72 (CEKCNTFTEAQICEVC) adopts a C4-type zinc-finger fold. Residues 80–175 (TLLCVVETPA…AVTRLARGVP (96 aa)) form the Toprim domain.

This sequence belongs to the RecR family.

Its function is as follows. May play a role in DNA repair. It seems to be involved in an RecBC-independent recombinational process of DNA repair. It may act with RecF and RecO. In Burkholderia cenocepacia (strain HI2424), this protein is Recombination protein RecR.